A 253-amino-acid polypeptide reads, in one-letter code: HTH-type transcriptional regulator YdeO (253 aa).

The HTH araC/xylS-type domain maps to 137-233; sequence GKVRNIVNMK…GNSPKRVSKE (97 aa). 2 consecutive DNA-binding regions (H-T-H motif) follow at residues 154–175 and 200–223; these read KDIC…KQEQ and VNKI…RKHF.

Its function is as follows. Induces the expression of gadE and mdtEF. Could also regulate the expression of other genes involved in acid resistance. This chain is HTH-type transcriptional regulator YdeO (ydeO), found in Escherichia coli O6:H1 (strain CFT073 / ATCC 700928 / UPEC).